A 288-amino-acid chain; its full sequence is Executioner caspase (288 aa).

C131 is a catalytic residue.

Belongs to the peptidase C14A family.

May induce host cell apoptosis and contribute of the establishment of a special cell cleavage process in which apoppotic bodies are rescued by the virus and differentiate to form large vesicles in which virion assembles. The sequence is that of Executioner caspase from Spodoptera frugiperda ascovirus 1a (SfAV-1a).